The primary structure comprises 232 residues: Thiamine import ATP-binding protein ThiQ (232 aa).

The ABC transporter domain maps to 2-230; the sequence is LKLTDITWLY…KASASALLGI (229 aa). Position 32–39 (32–39) interacts with ATP; sequence GPSGAGKS.

Belongs to the ABC transporter superfamily. Thiamine importer (TC 3.A.1.19.1) family. In terms of assembly, the complex is composed of two ATP-binding proteins (ThiQ), two transmembrane proteins (ThiP) and a solute-binding protein (ThiB).

The protein localises to the cell inner membrane. It catalyses the reaction thiamine(out) + ATP + H2O = thiamine(in) + ADP + phosphate + H(+). In terms of biological role, part of the ABC transporter complex ThiBPQ involved in thiamine import. Responsible for energy coupling to the transport system. The chain is Thiamine import ATP-binding protein ThiQ from Escherichia coli O6:K15:H31 (strain 536 / UPEC).